A 308-amino-acid polypeptide reads, in one-letter code: Ribonuclease Z (308 aa).

Zn(2+) contacts are provided by H61, H63, D65, H66, H142, D211, and H270. Catalysis depends on D65, which acts as the Proton acceptor.

This sequence belongs to the RNase Z family. As to quaternary structure, homodimer. Requires Zn(2+) as cofactor.

It catalyses the reaction Endonucleolytic cleavage of RNA, removing extra 3' nucleotides from tRNA precursor, generating 3' termini of tRNAs. A 3'-hydroxy group is left at the tRNA terminus and a 5'-phosphoryl group is left at the trailer molecule.. Zinc phosphodiesterase, which displays some tRNA 3'-processing endonuclease activity. Probably involved in tRNA maturation, by removing a 3'-trailer from precursor tRNA. This chain is Ribonuclease Z, found in Clostridium beijerinckii (strain ATCC 51743 / NCIMB 8052) (Clostridium acetobutylicum).